We begin with the raw amino-acid sequence, 124 residues long: Small ribosomal subunit protein bS6 (124 aa).

A disordered region spans residues 96–124; that stretch reads ETAPSPMMKEVQREEARKAAQTTTEGQAA. The segment covering 115-124 has biased composition (polar residues); sequence AQTTTEGQAA.

The protein belongs to the bacterial ribosomal protein bS6 family.

In terms of biological role, binds together with bS18 to 16S ribosomal RNA. The protein is Small ribosomal subunit protein bS6 of Cupriavidus necator (strain ATCC 17699 / DSM 428 / KCTC 22496 / NCIMB 10442 / H16 / Stanier 337) (Ralstonia eutropha).